An 816-amino-acid chain; its full sequence is Protein EFR3 homolog B (816 aa).

Residues 206 to 219 (SGEGTESRSPSPLQ) show a composition bias toward polar residues. A disordered region spans residues 206-230 (SGEGTESRSPSPLQASEKEKESPAE). Over residues 221 to 230 (SEKEKESPAE) the composition is skewed to basic and acidic residues.

The protein belongs to the EFR3 family. As to quaternary structure, component of a phosphatidylinositol 4-kinase (PI4K) complex. Palmitoylated at its N-terminus, anchoring the protein to the plasma membrane.

Its subcellular location is the cell membrane. In terms of biological role, component of a complex required to localize phosphatidylinositol 4-kinase (PI4K) to the plasma membrane. The complex acts as a regulator of phosphatidylinositol 4-phosphate (PtdIns(4)P) synthesis. In the complex, efr3b probably acts as the membrane-anchoring component. In Danio rerio (Zebrafish), this protein is Protein EFR3 homolog B (efr3b).